The sequence spans 352 residues: Holliday junction branch migration complex subunit RuvB (352 aa).

The interval 1–42 is disordered; that stretch reads MAIVSSSAGRADSQPPAAKSRVVDASPLPEEASPAREDGLRP. The tract at residues 13-201 is large ATPase domain (RuvB-L); it reads SQPPAAKSRV…FGLIQRLEFY (189 aa). Residues 33 to 42 show a composition bias toward basic and acidic residues; that stretch reads SPAREDGLRP. 9 residues coordinate ATP: L40, R41, G82, K85, T86, T87, R191, Y201, and R238. T86 lines the Mg(2+) pocket. The segment at 202–273 is small ATPAse domain (RuvB-S); sequence GLEDLQAIVE…LVDEALTLHR (72 aa). The tract at residues 276–352 is head domain (RuvB-H); that stretch reads ARGLDASDRR…RRHLGWPELP (77 aa). Residues R331 and R336 each contribute to the DNA site.

The protein belongs to the RuvB family. As to quaternary structure, homohexamer. Forms an RuvA(8)-RuvB(12)-Holliday junction (HJ) complex. HJ DNA is sandwiched between 2 RuvA tetramers; dsDNA enters through RuvA and exits via RuvB. An RuvB hexamer assembles on each DNA strand where it exits the tetramer. Each RuvB hexamer is contacted by two RuvA subunits (via domain III) on 2 adjacent RuvB subunits; this complex drives branch migration. In the full resolvosome a probable DNA-RuvA(4)-RuvB(12)-RuvC(2) complex forms which resolves the HJ.

It is found in the cytoplasm. The enzyme catalyses ATP + H2O = ADP + phosphate + H(+). The RuvA-RuvB-RuvC complex processes Holliday junction (HJ) DNA during genetic recombination and DNA repair, while the RuvA-RuvB complex plays an important role in the rescue of blocked DNA replication forks via replication fork reversal (RFR). RuvA specifically binds to HJ cruciform DNA, conferring on it an open structure. The RuvB hexamer acts as an ATP-dependent pump, pulling dsDNA into and through the RuvAB complex. RuvB forms 2 homohexamers on either side of HJ DNA bound by 1 or 2 RuvA tetramers; 4 subunits per hexamer contact DNA at a time. Coordinated motions by a converter formed by DNA-disengaged RuvB subunits stimulates ATP hydrolysis and nucleotide exchange. Immobilization of the converter enables RuvB to convert the ATP-contained energy into a lever motion, pulling 2 nucleotides of DNA out of the RuvA tetramer per ATP hydrolyzed, thus driving DNA branch migration. The RuvB motors rotate together with the DNA substrate, which together with the progressing nucleotide cycle form the mechanistic basis for DNA recombination by continuous HJ branch migration. Branch migration allows RuvC to scan DNA until it finds its consensus sequence, where it cleaves and resolves cruciform DNA. The polypeptide is Holliday junction branch migration complex subunit RuvB (Prochlorococcus marinus (strain MIT 9313)).